A 952-amino-acid chain; its full sequence is Glycine dehydrogenase (decarboxylating) (952 aa).

The residue at position 696 (lysine 696) is an N6-(pyridoxal phosphate)lysine.

The protein belongs to the GcvP family. In terms of assembly, the glycine cleavage system is composed of four proteins: P, T, L and H. Requires pyridoxal 5'-phosphate as cofactor.

It carries out the reaction N(6)-[(R)-lipoyl]-L-lysyl-[glycine-cleavage complex H protein] + glycine + H(+) = N(6)-[(R)-S(8)-aminomethyldihydrolipoyl]-L-lysyl-[glycine-cleavage complex H protein] + CO2. In terms of biological role, the glycine cleavage system catalyzes the degradation of glycine. The P protein binds the alpha-amino group of glycine through its pyridoxal phosphate cofactor; CO(2) is released and the remaining methylamine moiety is then transferred to the lipoamide cofactor of the H protein. In Pelagibacter ubique (strain HTCC1062), this protein is Glycine dehydrogenase (decarboxylating).